The following is a 128-amino-acid chain: Probable 4-amino-4-deoxy-L-arabinose-phosphoundecaprenol flippase subunit ArnF (128 aa).

Residues 1 to 2 are Cytoplasmic-facing; sequence MG. The helical transmembrane segment at 3 to 23 threads the bilayer; that stretch reads LMWGLFSVIIASAAQLSLGFA. Over 24–35 the chain is Periplasmic; it reads ASHLPPMTHLWD. A helical membrane pass occupies residues 36 to 56; that stretch reads FIAALLAFGLDARILLLGLLG. Residues 57–76 lie on the Cytoplasmic side of the membrane; that stretch reads YLLSVFCWYKTLHKLALSKA. The helical transmembrane segment at 77–97 threads the bilayer; the sequence is YALLSMSYVLVWIASMILPGW. The Periplasmic portion of the chain corresponds to 98 to 100; the sequence is EGT. A helical transmembrane segment spans residues 101–121; sequence FSLKALLGVACIMSGLMLIFL. Over 122–128 the chain is Cytoplasmic; sequence PTTKQRY.

The protein belongs to the ArnF family. In terms of assembly, heterodimer of ArnE and ArnF.

The protein localises to the cell inner membrane. It functions in the pathway bacterial outer membrane biogenesis; lipopolysaccharide biosynthesis. Translocates 4-amino-4-deoxy-L-arabinose-phosphoundecaprenol (alpha-L-Ara4N-phosphoundecaprenol) from the cytoplasmic to the periplasmic side of the inner membrane. In Escherichia coli O17:K52:H18 (strain UMN026 / ExPEC), this protein is Probable 4-amino-4-deoxy-L-arabinose-phosphoundecaprenol flippase subunit ArnF.